The following is a 507-amino-acid chain: Maturase K (507 aa).

This sequence belongs to the intron maturase 2 family. MatK subfamily.

The protein localises to the plastid. Its subcellular location is the chloroplast. Functionally, usually encoded in the trnK tRNA gene intron. Probably assists in splicing its own and other chloroplast group II introns. This is Maturase K from Liriodendron chinense (Chinese tulip tree).